The sequence spans 369 residues: Transmembrane protein 198 (369 aa).

Helical transmembrane passes span 37–57 (VVPS…CFFG), 60–80 (CFKA…IFLL), 93–113 (VEAS…VTML), 117–137 (VGLF…TLIG), 148–168 (SVWV…VLTL), 181–201 (VFGA…FALV), and 216–236 (VCWT…LGVL). A disordered region spans residues 266–308 (RQKEERRESSRKKKRKQPQSAQHTHAAKALHPEPAYRRKPNPI).

This sequence belongs to the TMEM198 family.

It localises to the membrane. The protein is Transmembrane protein 198 (tmem198ab) of Danio rerio (Zebrafish).